The sequence spans 229 residues: Potassium/proton antiporter CemA (229 aa).

Transmembrane regions (helical) follow at residues 7–27 (FTPLFYLASIVFLPWWISFSV), 107–127 (ILHFSTNIICFIILSGYSILG), and 189–209 (IISGLVSTFPVILDTIFKYWI).

The protein belongs to the CemA family.

Its subcellular location is the plastid. It is found in the chloroplast inner membrane. It carries out the reaction K(+)(in) + H(+)(out) = K(+)(out) + H(+)(in). Contributes to K(+)/H(+) antiport activity by supporting proton efflux to control proton extrusion and homeostasis in chloroplasts in a light-dependent manner to modulate photosynthesis. Prevents excessive induction of non-photochemical quenching (NPQ) under continuous-light conditions. Indirectly promotes efficient inorganic carbon uptake into chloroplasts. This is Potassium/proton antiporter CemA from Nicotiana tomentosiformis (Tobacco).